Consider the following 192-residue polypeptide: UPF0149 protein VIBHAR_03551 (192 aa).

It belongs to the UPF0149 family.

In Vibrio campbellii (strain ATCC BAA-1116), this protein is UPF0149 protein VIBHAR_03551.